Reading from the N-terminus, the 404-residue chain is Glutamyl-tRNA reductase (404 aa).

Substrate-binding positions include T47 to R50, S94, E99 to E101, and Q105. C48 functions as the Nucleophile in the catalytic mechanism. G174–G179 contributes to the NADP(+) binding site.

As to quaternary structure, homotetramer.

It carries out the reaction (S)-4-amino-5-oxopentanoate + tRNA(Glu) + NADP(+) = L-glutamyl-tRNA(Glu) + NADPH + H(+). Its pathway is porphyrin-containing compound metabolism; protoporphyrin-IX biosynthesis; 5-aminolevulinate from L-glutamyl-tRNA(Glu): step 1/2. Inhibited by heavy metal compounds, Zn(2+), and heme. Also competitively inhibited by glutamycin. Functionally, catalyzes the NADPH-dependent reduction of glutamyl-tRNA(Glu) to glutamate 1-semialdehyde (GSA). In the absence of NADPH, exhibits substrate esterase activity, leading to the release of glutamate from tRNA. The protein is Glutamyl-tRNA reductase (hemA) of Methanopyrus kandleri (strain AV19 / DSM 6324 / JCM 9639 / NBRC 100938).